We begin with the raw amino-acid sequence, 634 residues long: MSDVSGDGDLSATVTEHEVTPQPPVSSATYPSLTVSASYKESSGGKSSSKRRPIRPSFDAAADNEFITLLHGSDPVKVELNRLENEVRDKDRELGEANAEIKALRLSERQREKAVEELTEELTKLDEKLKLTESILESKNLEIKKINEEKKASMAAQFAAEATLRRVHAAQKDDDMPPIEAILAPLEAELKLARSEIGKLQEDNRALDRLTKSKEAALLEAERTVEAAMAKAAMVDDLQNKNQELMKQIEICQEENKILDRMHRQKVAEVEKLTQTVRELEEAVLAGGAAANAVRDYQRKFQEMNEERKTLDRELARAKVTANRVATVVANEWKDGNDKVMPVKQWLEERRFLQGEMQQLRDKLAITDRAAKSEAQLKEKFQLRLKVLEETLRGTSSSATRNTPEARSMSNGPSRRQSLGGAENLQKFTSNGALSKKAPASQMRHSLSINSTSVLKNAKGTSKSFDGGTRSVDRGKALLNGPGNYSFNKATDDSKEAESGNGWKENSEEKPQSEDPEAATEDSVPGVLYDLLQKEVVSLRKASNEKDQSLKDKDDAIEMLAKKVETLTKAMEVEAKKMRREVAAMEKEVAAMRVEKDQDARAKRFSNSKSPSNTAQILAGRAAGRSGGLTKSTQ.

The tract at residues methionine 1–serine 57 is disordered. Polar residues predominate over residues valine 25 to valine 35. The span at serine 36–serine 47 shows a compositional bias: low complexity. Residues aspartate 74–leucine 392 are a coiled coil. Positions isoleucine 258 to serine 494 are required for targeting to microtubules. 2 stretches are compositionally biased toward polar residues: residues arginine 393–glutamine 417 and methionine 443–serine 464. 2 disordered regions span residues arginine 393 to glycine 526 and valine 594 to glutamine 634. The stretch at leucine 532–arginine 601 forms a coiled coil. Residues phenylalanine 605–glutamine 616 show a composition bias toward polar residues.

This sequence belongs to the MAP70 family.

The protein resides in the cytoplasm. It localises to the cytoskeleton. Its function is as follows. Plant-specific protein that interact with microtubules. This chain is Microtubule-associated protein 70-2 (MAP70.2), found in Arabidopsis thaliana (Mouse-ear cress).